The following is a 496-amino-acid chain: Probable malate:quinone oxidoreductase (496 aa).

The protein belongs to the MQO family. Requires FAD as cofactor.

It catalyses the reaction (S)-malate + a quinone = a quinol + oxaloacetate. It functions in the pathway carbohydrate metabolism; tricarboxylic acid cycle; oxaloacetate from (S)-malate (quinone route): step 1/1. This chain is Probable malate:quinone oxidoreductase, found in Prochlorococcus marinus (strain MIT 9303).